Reading from the N-terminus, the 84-residue chain is Small ribosomal subunit protein uS15 (84 aa).

This sequence belongs to the universal ribosomal protein uS15 family. As to quaternary structure, part of the 30S ribosomal subunit. Forms a bridge to the 50S subunit in the 70S ribosome, contacting the 23S rRNA.

Functionally, one of the primary rRNA binding proteins, it binds directly to 16S rRNA where it helps nucleate assembly of the platform of the 30S subunit by binding and bridging several RNA helices of the 16S rRNA. In terms of biological role, forms an intersubunit bridge (bridge B4) with the 23S rRNA of the 50S subunit in the ribosome. This chain is Small ribosomal subunit protein uS15, found in Fervidobacterium nodosum (strain ATCC 35602 / DSM 5306 / Rt17-B1).